Consider the following 154-residue polypeptide: Methylglyoxal synthase (154 aa).

In terms of domain architecture, MGS-like spans 6-154 (GALPSRKQIA…AYIAERTKKL (149 aa)). Residues H19, K23, 45–48 (TGTT), and 65–66 (SG) each bind substrate. D71 functions as the Proton donor/acceptor in the catalytic mechanism. Residue H98 coordinates substrate.

Belongs to the methylglyoxal synthase family.

The enzyme catalyses dihydroxyacetone phosphate = methylglyoxal + phosphate. Its function is as follows. Catalyzes the formation of methylglyoxal from dihydroxyacetone phosphate. This chain is Methylglyoxal synthase, found in Saccharophagus degradans (strain 2-40 / ATCC 43961 / DSM 17024).